Reading from the N-terminus, the 130-residue chain is MTTKRKAYVRTMAPNWWQQLGFYRFYMLREGTSVPTVWFSILLIYGVFALKSGPAGWEGFVGFLQNPLVLLINIITLLAAVLHTKTWFELAPKAANIIVKDEKMGPEPVIKALWVVTIVATAIILAVALL.

3 helical membrane-spanning segments follow: residues 37-57, 60-80, and 109-129; these read VWFS…PAGW, FVGF…LLAA, and VIKA…AVAL.

The protein belongs to the FrdC family. In terms of assembly, part of an enzyme complex containing four subunits: a flavoprotein (FrdA), an iron-sulfur protein (FrdB), and two hydrophobic anchor proteins (FrdC and FrdD).

Its subcellular location is the cell inner membrane. Functionally, two distinct, membrane-bound, FAD-containing enzymes are responsible for the catalysis of fumarate and succinate interconversion; fumarate reductase is used in anaerobic growth, and succinate dehydrogenase is used in aerobic growth. Anchors the catalytic components of the fumarate reductase complex to the cell inner membrane, binds quinones. The chain is Fumarate reductase subunit C from Yersinia enterocolitica serotype O:8 / biotype 1B (strain NCTC 13174 / 8081).